The sequence spans 509 residues: UDP-N-acetylmuramoyl-L-alanyl-D-glutamate--2,6-diaminopimelate ligase (509 aa).

Residue Ser30 coordinates UDP-N-acetyl-alpha-D-muramoyl-L-alanyl-D-glutamate. ATP is bound at residue 110–116 (GTNGKTT). Residues 152–153 (TT), Ser179, Gln185, and Arg187 each bind UDP-N-acetyl-alpha-D-muramoyl-L-alanyl-D-glutamate. Position 219 is an N6-carboxylysine (Lys219). Residues Arg385, 409 to 412 (DNPR), Gly476, and Glu480 contribute to the meso-2,6-diaminopimelate site. A Meso-diaminopimelate recognition motif motif is present at residues 409–412 (DNPR).

The protein belongs to the MurCDEF family. MurE subfamily. The cofactor is Mg(2+). Carboxylation is probably crucial for Mg(2+) binding and, consequently, for the gamma-phosphate positioning of ATP.

It localises to the cytoplasm. It catalyses the reaction UDP-N-acetyl-alpha-D-muramoyl-L-alanyl-D-glutamate + meso-2,6-diaminopimelate + ATP = UDP-N-acetyl-alpha-D-muramoyl-L-alanyl-gamma-D-glutamyl-meso-2,6-diaminopimelate + ADP + phosphate + H(+). The protein operates within cell wall biogenesis; peptidoglycan biosynthesis. In terms of biological role, catalyzes the addition of meso-diaminopimelic acid to the nucleotide precursor UDP-N-acetylmuramoyl-L-alanyl-D-glutamate (UMAG) in the biosynthesis of bacterial cell-wall peptidoglycan. The polypeptide is UDP-N-acetylmuramoyl-L-alanyl-D-glutamate--2,6-diaminopimelate ligase (Geobacter sulfurreducens (strain ATCC 51573 / DSM 12127 / PCA)).